The following is a 105-amino-acid chain: Large ribosomal subunit protein uL23 (105 aa).

This sequence belongs to the universal ribosomal protein uL23 family. In terms of assembly, part of the 50S ribosomal subunit. Contacts protein L29, and trigger factor when it is bound to the ribosome.

Functionally, one of the early assembly proteins it binds 23S rRNA. One of the proteins that surrounds the polypeptide exit tunnel on the outside of the ribosome. Forms the main docking site for trigger factor binding to the ribosome. This Chloroherpeton thalassium (strain ATCC 35110 / GB-78) protein is Large ribosomal subunit protein uL23.